Consider the following 205-residue polypeptide: Large ribosomal subunit protein uL4 (205 aa).

The disordered stretch occupies residues 53–77; that stretch reads RAAVRGGGRKPWKQKGTGRARAGSI. Residues 59–70 show a composition bias toward basic residues; the sequence is GGRKPWKQKGTG.

This sequence belongs to the universal ribosomal protein uL4 family. In terms of assembly, part of the 50S ribosomal subunit.

One of the primary rRNA binding proteins, this protein initially binds near the 5'-end of the 23S rRNA. It is important during the early stages of 50S assembly. It makes multiple contacts with different domains of the 23S rRNA in the assembled 50S subunit and ribosome. In terms of biological role, forms part of the polypeptide exit tunnel. This Acidithiobacillus ferrooxidans (strain ATCC 23270 / DSM 14882 / CIP 104768 / NCIMB 8455) (Ferrobacillus ferrooxidans (strain ATCC 23270)) protein is Large ribosomal subunit protein uL4.